A 264-amino-acid polypeptide reads, in one-letter code: tRNA-uridine aminocarboxypropyltransferase A (264 aa).

Zn(2+) contacts are provided by Cys-25, Cys-28, Cys-35, and Cys-37. A DXTW motif is present at residues Asp-144 to Trp-147. Residues Arg-245 to Glu-264 form a disordered region. Positions Gln-254–Glu-264 are enriched in polar residues.

It belongs to the TDD superfamily. DTWD2 family.

It catalyses the reaction a uridine in tRNA + S-adenosyl-L-methionine = a 3-[(3S)-3-amino-3-carboxypropyl]uridine in tRNA + S-methyl-5'-thioadenosine + H(+). In terms of biological role, catalyzes the formation of 3-(3-amino-3-carboxypropyl)uridine (acp3U) at position 20a in the D-loop of several cytoplasmic tRNAs (acp3U(20a)). The protein is tRNA-uridine aminocarboxypropyltransferase A of Arabidopsis thaliana (Mouse-ear cress).